Reading from the N-terminus, the 135-residue chain is Small ribosomal subunit protein uS11 (135 aa).

The interval 1-26 (MPPKSRTAGGARKTRRKEKKNVSHGH) is disordered. The span at 12–23 (RKTRRKEKKNVS) shows a compositional bias: basic residues.

This sequence belongs to the universal ribosomal protein uS11 family. As to quaternary structure, part of the 30S ribosomal subunit. Interacts with proteins S7 and S18. Binds to IF-3.

Its function is as follows. Located on the platform of the 30S subunit, it bridges several disparate RNA helices of the 16S rRNA. Forms part of the Shine-Dalgarno cleft in the 70S ribosome. This Beutenbergia cavernae (strain ATCC BAA-8 / DSM 12333 / CCUG 43141 / JCM 11478 / NBRC 16432 / NCIMB 13614 / HKI 0122) protein is Small ribosomal subunit protein uS11.